The following is a 134-amino-acid chain: Profilin-2 (134 aa).

The residue at position 114 (T114) is a Phosphothreonine.

It belongs to the profilin family. As to quaternary structure, occurs in many kinds of cells as a complex with monomeric actin in a 1:1 ratio. Post-translationally, phosphorylated by MAP kinases.

The protein localises to the cytoplasm. Its subcellular location is the cytoskeleton. In terms of biological role, binds to actin and affects the structure of the cytoskeleton. At high concentrations, profilin prevents the polymerization of actin, whereas it enhances it at low concentrations. By binding to PIP2, it inhibits the formation of IP3 and DG. The protein is Profilin-2 (PRO2) of Nicotiana tabacum (Common tobacco).